A 265-amino-acid chain; its full sequence is MKIAIAGASGRMGRMLIEAVLNDADAQLVGALDRAGSPFLGQDAGAFLGKDTGVKLTDDLDAVFAQAEYLIDFTRPEGTMAHVEAALRHDVKLVIGTTGFTAEQKADLQAAAARIGIVFAANMSVGVNVTLKLLEFAAKHFSHGYDIEIIEAHHRHKVDAPSGTALMMGEAVAGALGRSLDDCAVYGRHGVTGERDPSSIGFAAVRGGDIVGDHTVLFAGIGERIEITHKSSSRVSYAQGALRAVRFLSARGAGLFDMQDVLGLR.

Residues 7–12 (GASGRM) and aspartate 33 each bind NAD(+). An NADP(+)-binding site is contributed by arginine 34. Residues 96–98 (GTT) and 120–123 (AANM) each bind NAD(+). Histidine 153 (proton donor/acceptor) is an active-site residue. Histidine 154 is a (S)-2,3,4,5-tetrahydrodipicolinate binding site. Catalysis depends on lysine 157, which acts as the Proton donor. (S)-2,3,4,5-tetrahydrodipicolinate is bound at residue 163–164 (GT).

The protein belongs to the DapB family.

The protein resides in the cytoplasm. It catalyses the reaction (S)-2,3,4,5-tetrahydrodipicolinate + NAD(+) + H2O = (2S,4S)-4-hydroxy-2,3,4,5-tetrahydrodipicolinate + NADH + H(+). It carries out the reaction (S)-2,3,4,5-tetrahydrodipicolinate + NADP(+) + H2O = (2S,4S)-4-hydroxy-2,3,4,5-tetrahydrodipicolinate + NADPH + H(+). It participates in amino-acid biosynthesis; L-lysine biosynthesis via DAP pathway; (S)-tetrahydrodipicolinate from L-aspartate: step 4/4. In terms of biological role, catalyzes the conversion of 4-hydroxy-tetrahydrodipicolinate (HTPA) to tetrahydrodipicolinate. In Burkholderia orbicola (strain MC0-3), this protein is 4-hydroxy-tetrahydrodipicolinate reductase.